Reading from the N-terminus, the 226-residue chain is MEPIKNLPRLCRTLSYEFKNIELLTQALTHRSAANKHNERLEFLGDSILSIVISDALYHQFPKATEGDLSRMRATLVRGDTLTIIAQEFKLGDYLYLGPGELKSGGFRRESILADAVEAIIGAVYLDSDLEVCRALLLKWYAERLAEIQPGISQKDAKTLLQEHLQGFKKPLPDYQVINIEGDAHDQTFTVECRIEDLSQSVIGVASSRRKAEQIAAAQVLELLKK.

Residues 7 to 129 (LPRLCRTLSY…IIGAVYLDSD (123 aa)) enclose the RNase III domain. Residue Glu-42 participates in Mg(2+) binding. The active site involves Asp-46. Mg(2+) is bound by residues Asp-115 and Glu-118. Glu-118 is a catalytic residue. A DRBM domain is found at 156–226 (DAKTLLQEHL…AAQVLELLKK (71 aa)).

This sequence belongs to the ribonuclease III family. As to quaternary structure, homodimer. Requires Mg(2+) as cofactor.

The protein localises to the cytoplasm. It catalyses the reaction Endonucleolytic cleavage to 5'-phosphomonoester.. In terms of biological role, digests double-stranded RNA. Involved in the processing of primary rRNA transcript to yield the immediate precursors to the large and small rRNAs (23S and 16S). Processes some mRNAs, and tRNAs when they are encoded in the rRNA operon. Processes pre-crRNA and tracrRNA of type II CRISPR loci if present in the organism. The chain is Ribonuclease 3 from Shewanella baltica (strain OS223).